A 225-amino-acid chain; its full sequence is MMNTAEFKVIFNQYDELDTLLLEAITQLKIDISAEQRRKLLLYLDKLLFWNKAYNLTAIKQPKEALIKHVIDCLAILPHLKPGKLLDIGTGAGLPGVIVAICEPERPITVLDSNQKKIRFIRQSISELQVTNVTPVASRIENFNPDEGDKFAVVTSRAFASLTDFVEAAAPRLAQGGWLQAMKGLIPEPQELQVLQDQWQIDNIALSVPYLHETRHLTELHKIVI.

S-adenosyl-L-methionine contacts are provided by residues glycine 89, leucine 94, isoleucine 140–glutamate 141, and arginine 157.

This sequence belongs to the methyltransferase superfamily. RNA methyltransferase RsmG family.

The protein resides in the cytoplasm. The catalysed reaction is guanosine(527) in 16S rRNA + S-adenosyl-L-methionine = N(7)-methylguanosine(527) in 16S rRNA + S-adenosyl-L-homocysteine. In terms of biological role, specifically methylates the N7 position of guanine in position 527 of 16S rRNA. The polypeptide is Ribosomal RNA small subunit methyltransferase G (Psychrobacter sp. (strain PRwf-1)).